The sequence spans 47 residues: Short transmembrane mitochondrial protein 1 (47 aa).

A helical transmembrane segment spans residues 7 to 23 (GFTLGNVVGMYLAQNYD).

The protein belongs to the STMP1 family. As to quaternary structure, interacts with components of the ubiquinol-cytochrome c oxidoreductase (cytochrome b-c1 complex, complex III, CIII), such as UQCRC1/QCR1, UQCRC2/QCR2 and UQCR10/QCR9. Interacts with components of the cytochrome c oxidase (mitochondrial respiratory chain complex IV) complex, such as MT-CO2. In terms of tissue distribution, expressed in monocytes and dendritic cells.

It localises to the mitochondrion inner membrane. The protein resides in the mitochondrion outer membrane. Its subcellular location is the mitochondrion intermembrane space. Its function is as follows. Microprotein involved in mitochondrial respiratory chain complex III (ubiquinol-cytochrome c oxidoreductase) and complex IV (mitochondrial cytochrome c oxidase complex) assembly. Required for the formation of mitochondrial supercomplexes (SCs). Also required for the activation of the NLRP3 inflammasome. This Homo sapiens (Human) protein is Short transmembrane mitochondrial protein 1.